Consider the following 309-residue polypeptide: MAQQEVVEGFKFEQRHGKERVRVARVWKTRQGQHFIVEWRVGITLFSDCVNSYLRDDNSDIVATDTMKNTVYAKAKECSDILSAEEFAILLAKHFVSFYQKVTGAIVNIVEKPWERVTVDGQPHEHGFKLGSEKHTTEAIVQKSGSLQLTSGIEGLSVLKTTQSGFVNFIRDKYTALPDTRERMVATEVTALWRYSYESLYSLPQKPLYFTEKYQEVKKVLADTFFGPPKGGVYSPSVQNTLYLMAKATLNRFPDIAYVSLKLPNLHFIPVNISNQDGPIVKFEDDVYLPTDEPHGSIQASLSRLWSKL.

Residues Lys18 and Thr64 each act as charge relay system in the active site. Residues Thr64, Asp65, Phe166, Arg183, Val238, Gln239, and Asn265 each coordinate urate. His267 acts as the Charge relay system in catalysis. Positions 307-309 match the Microbody targeting signal motif; it reads SKL.

This sequence belongs to the uricase family. In terms of assembly, homotetramer. Post-translationally, the N-terminus is blocked. As to expression, expressed predominantly in the uninfected cells of the central tissue of the root nodule.

It localises to the peroxisome. The enzyme catalyses urate + O2 + H2O = 5-hydroxyisourate + H2O2. Its pathway is purine metabolism; urate degradation; (S)-allantoin from urate: step 1/3. Its function is as follows. Catalyzes the oxidation of uric acid to 5-hydroxyisourate, which is further processed to form (S)-allantoin. The polypeptide is Uricase-2 isozyme 1 (Glycine max (Soybean)).